An 855-amino-acid chain; its full sequence is Leucine--tRNA ligase (855 aa).

The 'HIGH' region motif lies at 45–55 (PYPSGRLHMGH). The 'KMSKS' region signature appears at 619–623 (KMSKS). K622 lines the ATP pocket.

It belongs to the class-I aminoacyl-tRNA synthetase family.

The protein localises to the cytoplasm. The enzyme catalyses tRNA(Leu) + L-leucine + ATP = L-leucyl-tRNA(Leu) + AMP + diphosphate. This is Leucine--tRNA ligase from Hyphomonas neptunium (strain ATCC 15444).